We begin with the raw amino-acid sequence, 603 residues long: Elongation factor 4 (603 aa).

Positions 7 to 191 constitute a tr-type G domain; the sequence is SNIRNFSIVA…AIVTRLPPPK (185 aa). GTP is bound by residues 19 to 24 and 138 to 141; these read DHGKST and NKVD.

This sequence belongs to the TRAFAC class translation factor GTPase superfamily. Classic translation factor GTPase family. LepA subfamily.

It is found in the cell inner membrane. It carries out the reaction GTP + H2O = GDP + phosphate + H(+). In terms of biological role, required for accurate and efficient protein synthesis under certain stress conditions. May act as a fidelity factor of the translation reaction, by catalyzing a one-codon backward translocation of tRNAs on improperly translocated ribosomes. Back-translocation proceeds from a post-translocation (POST) complex to a pre-translocation (PRE) complex, thus giving elongation factor G a second chance to translocate the tRNAs correctly. Binds to ribosomes in a GTP-dependent manner. The protein is Elongation factor 4 of Bradyrhizobium diazoefficiens (strain JCM 10833 / BCRC 13528 / IAM 13628 / NBRC 14792 / USDA 110).